An 80-amino-acid chain; its full sequence is Small ribosomal subunit protein uS17 (80 aa).

It belongs to the universal ribosomal protein uS17 family. Part of the 30S ribosomal subunit.

Its function is as follows. One of the primary rRNA binding proteins, it binds specifically to the 5'-end of 16S ribosomal RNA. This chain is Small ribosomal subunit protein uS17, found in Brucella suis (strain ATCC 23445 / NCTC 10510).